The primary structure comprises 332 residues: UPF0194 membrane protein YbhG (332 aa).

The first 16 residues, 1-16, serve as a signal peptide directing secretion; that stretch reads MMKKPVVIGLAVVVLA. Residues 108–209 adopt a coiled-coil conformation; sequence EEIAQAAAAV…LNLQDSTLIA (102 aa).

Belongs to the UPF0194 family.

It is found in the periplasm. This Escherichia coli O127:H6 (strain E2348/69 / EPEC) protein is UPF0194 membrane protein YbhG.